We begin with the raw amino-acid sequence, 253 residues long: Probable proteasome subunit alpha type-7 (253 aa).

Ser-104 is subject to Phosphoserine.

This sequence belongs to the peptidase T1A family. The 26S proteasome consists of a 20S proteasome core and two 19S regulatory subunits. The 20S proteasome core is composed of 28 subunits that are arranged in four stacked rings, resulting in a barrel-shaped structure. The two end rings are each formed by seven alpha subunits, and the two central rings are each formed by seven beta subunits. The catalytic chamber with the active sites is on the inside of the barrel.

Its subcellular location is the cytoplasm. The protein resides in the nucleus. Functionally, the proteasome is a multicatalytic proteinase complex which is characterized by its ability to cleave peptides with Arg, Phe, Tyr, Leu, and Glu adjacent to the leaving group at neutral or slightly basic pH. The proteasome has an ATP-dependent proteolytic activity. The chain is Probable proteasome subunit alpha type-7 (pre10) from Schizosaccharomyces pombe (strain 972 / ATCC 24843) (Fission yeast).